We begin with the raw amino-acid sequence, 330 residues long: VERPPVWLMRQAGRYMKSYQNLCEKYPLFRERSENVDLVVEISLQPWKVFKPDGVILFSDILTPLPGMNIPFDIVKGKGPVIYDPLRTAAAVNEVREFVPEEWVPYVGQALNLLRGEVKNEAAVLGFVGAPFTLASYCVEGGSSKNFSKIKRMAFAEPAILHNLLQKFTTSMANYIKYQADNGAQAVQIFDSWATELSPVDFEEFSLPYLKQIVDSVKETHPDLPLILYASGSGGLLERLPLTGVDVVSLDWTVDMAEGRKRLGSNIAVQGNVDPGVLFGSKEFITKRIYDTVQKAGSQGHVLNLGHGIKVGTPEENVAHFFEVAKGIRY.

Substrate contacts are provided by residues 10–14 (RQAGR), phenylalanine 29, serine 59, aspartate 60, tyrosine 137, serine 192, and histidine 307.

This sequence belongs to the uroporphyrinogen decarboxylase family. Homodimer.

The protein localises to the plastid. It is found in the chloroplast. It carries out the reaction uroporphyrinogen III + 4 H(+) = coproporphyrinogen III + 4 CO2. Its pathway is porphyrin-containing compound metabolism; protoporphyrin-IX biosynthesis; coproporphyrinogen-III from 5-aminolevulinate: step 4/4. In terms of biological role, catalyzes the decarboxylation of four acetate groups of uroporphyrinogen-III to yield coproporphyrinogen-III. The protein is Uroporphyrinogen decarboxylase (DCUP) of Hordeum vulgare (Barley).